We begin with the raw amino-acid sequence, 401 residues long: Adenosine 3'-phospho 5'-phosphosulfate transporter 2 (401 aa).

N-linked (GlcNAc...) asparagine glycans are attached at residues Asn12 and Asn71. 6 helical membrane-spanning segments follow: residues 78-98 (LTQF…YGYL), 114-134 (YLTL…LQLI), 147-167 (MIIA…LGYL), 170-190 (PTQV…GVFI), 196-216 (NVAD…FTLA), and 223-243 (NFNL…AVIG). A glycan (N-linked (GlcNAc...) asparagine) is linked at Asn254. Transmembrane regions (helical) follow at residues 267–287 (IGFV…PAVT), 298–317 (GYAF…VLAL), 324–346 (LIAV…IFFA), and 349–369 (FTFQ…LNVY).

This sequence belongs to the nucleotide-sugar transporter family. SLC35B subfamily. In terms of tissue distribution, preferentially and highly expressed in colon.

It localises to the golgi apparatus membrane. The catalysed reaction is 3'-phosphoadenylyl sulfate(in) + adenosine 3',5'-bisphosphate(out) = 3'-phosphoadenylyl sulfate(out) + adenosine 3',5'-bisphosphate(in). Its function is as follows. Probably functions as a 3'-phosphoadenylyl sulfate:adenosine 3',5'-bisphosphate antiporter at the Golgi membranes. Mediates the transport from the cytosol into the lumen of the Golgi of 3'-phosphoadenylyl sulfate/adenosine 3'-phospho 5'-phosphosulfate (PAPS), a universal sulfuryl donor for sulfation events that take place in that compartment. The protein is Adenosine 3'-phospho 5'-phosphosulfate transporter 2 of Homo sapiens (Human).